The sequence spans 2102 residues: Probable serine/threonine-protein kinase DDB_G0272282 (2102 aa).

The PX domain occupies 1 to 118 (MKYQLSILGD…NWLVPQNEPA (118 aa)). Residues 124 to 222 (NPDKSGYLIK…WIKAIELSQQ (99 aa)) form the PH domain. Residues 225-240 (QDQEQYRKQEEEERQK) show a composition bias toward basic and acidic residues. Disordered stretches follow at residues 225–289 (QDQE…SDGS), 302–390 (GPNN…SDLN), 426–558 (EQPG…SASP), 574–665 (SNLP…PLPN), 685–768 (NNNS…NNSL), 804–842 (KKKE…GTLR), 1029–1051 (QQQQ…SSVN), 1106–1224 (GTPT…PQPQ), and 1476–1514 (SSKV…SSLT). Composition is skewed to low complexity over residues 256–281 (STLT…LPSS) and 304–327 (NNSN…NNHN). A compositionally biased stretch (basic residues) spans 328 to 348 (HYNHHNNNHNNSHHHHHHHNG). 2 stretches are compositionally biased toward low complexity: residues 353 to 376 (SSQV…STSL) and 426 to 437 (EQPGSYQQPQHQ). Residues 438-450 (QGGGGGGGGGGGN) are compositionally biased toward gly residues. Low complexity predominate over residues 466-484 (SNLSSRSNSNSSGSSSGSG). The span at 485–501 (SSSGSGPIGSGGVGGGL) shows a compositional bias: gly residues. 2 stretches are compositionally biased toward low complexity: residues 535-558 (SNSS…SASP) and 587-626 (NANN…NNGN). The segment covering 627–659 (TASGSSCNTTPNLLPAPTNVSPIQNRARSSPMT) has biased composition (polar residues). Residues 804 to 824 (KKKEKDKEKEKDKEKEKEKEI) are compositionally biased toward basic and acidic residues. The segment covering 827–841 (NISTSTTPNKKNGTL) has biased composition (polar residues). The segment covering 1106-1118 (GTPTTTSGDNTPL) has biased composition (polar residues). 3 stretches are compositionally biased toward low complexity: residues 1119–1182 (TNTA…NSSI), 1196–1221 (EQQQ…QQQP), and 1476–1492 (SSKV…SPIL). Residues 1493–1507 (SSPPPPMKQPPPQVI) show a composition bias toward pro residues. The 325-residue stretch at 1527–1851 (FEIIKPISRG…AYEVKTHPFF (325 aa)) folds into the Protein kinase domain. ATP is bound by residues 1533–1541 (ISRGAFGRV) and Lys1556. The active-site Proton acceptor is the Asp1650. Low complexity-rich tracts occupy residues 1687–1729 (NTNT…SQTN), 1902–1999 (SQPQ…NINN), and 2006–2052 (NNNS…QINN). 2 disordered regions span residues 1687–1741 (NTNT…KNTL) and 1902–2070 (SQPQ…SKIE). One can recognise an AGC-kinase C-terminal domain in the interval 1852 to 1911 (ANVNWDTLIDQEMDNIFLPKPENNYDTDYFWDRQSMYDDEAEDDFLTINQSQPQHQSQHQ).

This sequence belongs to the protein kinase superfamily. AGC Ser/Thr protein kinase family.

It carries out the reaction L-seryl-[protein] + ATP = O-phospho-L-seryl-[protein] + ADP + H(+). The catalysed reaction is L-threonyl-[protein] + ATP = O-phospho-L-threonyl-[protein] + ADP + H(+). The polypeptide is Probable serine/threonine-protein kinase DDB_G0272282 (Dictyostelium discoideum (Social amoeba)).